A 306-amino-acid polypeptide reads, in one-letter code: Glutaminase (306 aa).

Substrate-binding residues include serine 62, asparagine 114, glutamate 159, asparagine 166, tyrosine 190, tyrosine 242, and valine 260.

This sequence belongs to the glutaminase family. In terms of assembly, homotetramer.

It catalyses the reaction L-glutamine + H2O = L-glutamate + NH4(+). This is Glutaminase from Clostridium tetani (strain Massachusetts / E88).